The sequence spans 252 residues: 3-dehydroquinate dehydratase (252 aa).

Residues Ser-21, 46–48, and Arg-82 contribute to the 3-dehydroquinate site; that span reads EWR. Residue His-143 is the Proton donor/acceptor of the active site. Catalysis depends on Lys-170, which acts as the Schiff-base intermediate with substrate. 3-dehydroquinate contacts are provided by Arg-213, Ser-232, and Gln-236.

Belongs to the type-I 3-dehydroquinase family. In terms of assembly, homodimer.

The catalysed reaction is 3-dehydroquinate = 3-dehydroshikimate + H2O. Its pathway is metabolic intermediate biosynthesis; chorismate biosynthesis; chorismate from D-erythrose 4-phosphate and phosphoenolpyruvate: step 3/7. In terms of biological role, involved in the third step of the chorismate pathway, which leads to the biosynthesis of aromatic amino acids. Catalyzes the cis-dehydration of 3-dehydroquinate (DHQ) and introduces the first double bond of the aromatic ring to yield 3-dehydroshikimate. The chain is 3-dehydroquinate dehydratase from Escherichia coli O7:K1 (strain IAI39 / ExPEC).